Consider the following 216-residue polypeptide: Ras-related protein RabN1 (216 aa).

A GTP-binding site is contributed by 15–22; the sequence is GDYNSGKT. The Effector region motif lies at 37-44; sequence TCPSTFDL. GTP contacts are provided by residues 62–66 and 128–131; these read DTAGQ and TKSD. Residue Cys-216 is the site of S-geranylgeranyl cysteine attachment.

This sequence belongs to the small GTPase superfamily. Rab family.

It is found in the cell membrane. This Dictyostelium discoideum (Social amoeba) protein is Ras-related protein RabN1 (rabN1).